Reading from the N-terminus, the 439-residue chain is Tol-Pal system protein TolB (439 aa).

The first 22 residues, 1 to 22, serve as a signal peptide directing secretion; it reads MKKPLRWLAALTALLLPLSALA.

It belongs to the TolB family. In terms of assembly, the Tol-Pal system is composed of five core proteins: the inner membrane proteins TolA, TolQ and TolR, the periplasmic protein TolB and the outer membrane protein Pal. They form a network linking the inner and outer membranes and the peptidoglycan layer.

The protein resides in the periplasm. Part of the Tol-Pal system, which plays a role in outer membrane invagination during cell division and is important for maintaining outer membrane integrity. In Xanthomonas axonopodis pv. citri (strain 306), this protein is Tol-Pal system protein TolB.